The chain runs to 90 residues: Antitoxin epsilon (90 aa).

Belongs to the epsilon antitoxin family. In the presence of the zeta toxin, forms an inactive PezA(2)PezT(2) heterotetramer.

Its function is as follows. Antitoxin component of a type II toxin-antitoxin (TA) system. Neutralizes the toxic effect of cognate zeta toxin. Part of a postsegregational killing (PSK) system involved in the killing of plasmid-free cells. Continuous synthesis of the epsilon antitoxin is required to counteract the zeta toxin. This is Antitoxin epsilon from Streptococcus agalactiae.